The following is a 158-amino-acid chain: AP-1 complex subunit sigma-1A (158 aa).

Serine 147 is subject to Phosphoserine.

This sequence belongs to the adaptor complexes small subunit family. As to quaternary structure, adaptor protein complex 1 (AP-1) is a heterotetramer composed of two large adaptins (gamma-type subunit AP1G1 and beta-type subunit AP1B1), a medium adaptin (mu-type subunit AP1M1 or AP1M2) and a small adaptin (sigma-type subunit AP1S1 or AP1S2 or AP1S3). In terms of tissue distribution, widely expressed.

It localises to the golgi apparatus. It is found in the cytoplasmic vesicle membrane. Its subcellular location is the membrane. The protein resides in the clathrin-coated pit. Subunit of clathrin-associated adaptor protein complex 1 that plays a role in protein sorting in the late-Golgi/trans-Golgi network (TGN) and/or endosomes. The AP complexes mediate both the recruitment of clathrin to membranes and the recognition of sorting signals within the cytosolic tails of transmembrane cargo molecules. This Homo sapiens (Human) protein is AP-1 complex subunit sigma-1A (AP1S1).